Reading from the N-terminus, the 524-residue chain is Translation initiation factor eIF2B subunit delta (524 aa).

The interval M1 to Y174 is disordered. The residue at position 2 (A2) is an N-acetylalanine. 2 stretches are compositionally biased toward basic and acidic residues: residues V8–L20 and L31–R40. A Phosphoserine modification is found at S12. The segment covering K41–K51 has biased composition (basic residues). Phosphothreonine is present on T86. Basic and acidic residues-rich tracts occupy residues S96 to E121 and R161 to Y174. The interval R171–L180 is may bind the chemical integrated stress response (ISR) inhibitor ISRIB.

Belongs to the eIF-2B alpha/beta/delta subunits family. As to quaternary structure, component of the translation initiation factor 2B (eIF2B) complex which is a heterodecamer of two sets of five different subunits: alpha, beta, gamma, delta and epsilon. Subunits alpha, beta and delta comprise a regulatory subcomplex and subunits epsilon and gamma comprise a catalytic subcomplex. Within the complex, the hexameric regulatory complex resides at the center, with the two heterodimeric catalytic subcomplexes bound on opposite sides.

It localises to the cytoplasm. The protein localises to the cytosol. With respect to regulation, activated by the chemical integrated stress response (ISR) inhibitor ISRIB which stimulates guanine nucleotide exchange factor activity for both phosphorylated and unphosphorylated eIF2. Its function is as follows. Acts as a component of the translation initiation factor 2B (eIF2B) complex, which catalyzes the exchange of GDP for GTP on eukaryotic initiation factor 2 (eIF2) gamma subunit. Its guanine nucleotide exchange factor activity is repressed when bound to eIF2 complex phosphorylated on the alpha subunit, thereby limiting the amount of methionyl-initiator methionine tRNA available to the ribosome and consequently global translation is repressed. In Rattus norvegicus (Rat), this protein is Translation initiation factor eIF2B subunit delta (Eif2b4).